The following is a 422-amino-acid chain: Autophagy-related protein 21 (422 aa).

WD repeat units follow at residues Met-1–Glu-35, Ser-102–Gln-153, Met-166–Val-206, Val-228–Leu-268, Asn-280–Ser-319, and Lys-374–Val-414. A L/FRRG motif motif is present at residues Phe-276–Asn-280.

This sequence belongs to the WD repeat PROPPIN family.

It is found in the cytoplasm. Its subcellular location is the membrane. It localises to the vacuole membrane. Required for cytoplasm to vacuole transport (Cvt) vesicles formation and mitophagy. Involved in binding of phosphatidylethanolamine to ATG8 and in recruitment of ATG8 and ATG5 to the pre-autophagosomal structure. Protects ATG8 from ARG4-mediated cleavage. This Vanderwaltozyma polyspora (strain ATCC 22028 / DSM 70294 / BCRC 21397 / CBS 2163 / NBRC 10782 / NRRL Y-8283 / UCD 57-17) (Kluyveromyces polysporus) protein is Autophagy-related protein 21 (ATG21).